Here is a 338-residue protein sequence, read N- to C-terminus: UbiA prenyltransferase domain-containing protein 1 (338 aa).

A disordered region spans residues 1 to 39; the sequence is MAAVQAPGEKINIQAGETTQVGDTDQQRNDWPEEDRLPE. Position 2 is an N-acetylalanine (Ala2). Residues 15–24 show a composition bias toward polar residues; it reads AGETTQVGDT. Positions 25–39 are enriched in basic and acidic residues; sequence DQQRNDWPEEDRLPE. The next 8 helical transmembrane spans lie at 83-103, 134-154, 160-180, 188-208, 209-229, 245-267, 277-297, and 315-335; these read LLLG…LVNT, FGVF…YLST, LALI…GIGF, LVIL…VQVG, SLAI…EAIL, IVTL…LLFL, THCS…FSLE, and LNLL…AGSL.

It belongs to the UbiA prenyltransferase family. In terms of assembly, interacts with HMGCR and SOAT1.

It is found in the endoplasmic reticulum membrane. It localises to the golgi apparatus membrane. The protein resides in the mitochondrion membrane. It carries out the reaction menadiol + (2E,6E,10E)-geranylgeranyl diphosphate = menaquinol-4 + diphosphate. It catalyses the reaction all-trans-decaprenyl diphosphate + 4-hydroxybenzoate = 4-hydroxy-3-(all-trans-decaprenyl)benzoate + diphosphate. It functions in the pathway quinol/quinone metabolism; menaquinone biosynthesis. The protein operates within cofactor biosynthesis; ubiquinone biosynthesis. In terms of biological role, prenyltransferase that mediates the formation of menaquinone-4 (MK-4) and coenzyme Q10. MK-4 is a vitamin K2 isoform required for endothelial cell development. Mediates the conversion of phylloquinone (PK) into MK-4, probably by cleaving the side chain of phylloquinone (PK) to release 2-methyl-1,4-naphthoquinone (menadione; K3) and then prenylating it with geranylgeranyl pyrophosphate (GGPP) to form MK-4. Also plays a role in cardiovascular development independently of MK-4 biosynthesis, by acting as a coenzyme Q10 biosynthetic enzyme: coenzyme Q10, also named ubiquinone, plays an important antioxidant role in the cardiovascular system. Mediates biosynthesis of coenzyme Q10 in the Golgi membrane, leading to protect cardiovascular tissues from NOS3/eNOS-dependent oxidative stress. The sequence is that of UbiA prenyltransferase domain-containing protein 1 (Ubiad1) from Rattus norvegicus (Rat).